The primary structure comprises 63 residues: Large ribosomal subunit protein uL30 (63 aa).

It belongs to the universal ribosomal protein uL30 family. In terms of assembly, part of the 50S ribosomal subunit.

The chain is Large ribosomal subunit protein uL30 from Rickettsia akari (strain Hartford).